A 298-amino-acid polypeptide reads, in one-letter code: Deleted in azoospermia-like (298 aa).

The interval 1 to 27 (MSATTSEAPNSAVSREASTQSSSATTS) is disordered. The span at 11 to 27 (SAVSREASTQSSSATTS) shows a compositional bias: low complexity. An RRM domain is found at 40-115 (NTVFVGGIDV…KKLKLGPAIR (76 aa)). The tract at residues 80 to 132 (KGYGFVSFYNDVDVQKIVESQINFHGKKLKLGPAIRKQNLCTYHVQPRPLIFN) is homodimerization. In terms of domain architecture, DAZ spans 167-190 (AYPPYPSSPVQVITGYQLPVYNYQ). Phosphotyrosine is present on Y276.

The protein belongs to the RRM DAZ family. As to quaternary structure, homodimer and heterodimer. Forms a heterodimer with DAZ. Interacts with BOLL, DAZAP1 and DAZAP2. Interacts with PUM2. Multiple DAZL RRMs can bind to a single RNA containing multiple GUU triplets. Expressed predominantly in testis with lower levels in ovary. In testis, it is expressed in pachytene spermatocytes and at lower level in type-B spermatogonia, preleptotene and zygotene spermatocytes. In ovary, it is expressed in maturing follicles. In embryonic and prepuberal ovary, it is expressed in the oocyte and follicular cells.

Its subcellular location is the cytoplasm. RNA-binding protein, which is essential for gametogenesis in both males and females. Plays a central role during spermatogenesis. Acts by binding to the 3'-UTR of mRNA, specifically recognizing GUU triplets, and thereby regulating the translation of key transcripts. This Mus musculus (Mouse) protein is Deleted in azoospermia-like (Dazl).